A 366-amino-acid chain; its full sequence is Lysophosphatidic acid receptor 1-A (366 aa).

Topologically, residues 1-52 (MASLSEFVSEPISMMSQTSAASESQCYYNETIAFFYNRSGKYLATEWNAVSK) are extracellular. 2 disulfide bridges follow: Cys26-Cys192 and Cys190-Cys197. N-linked (GlcNAc...) asparagine glycosylation is found at Asn29 and Asn37. Lys41 contacts a 1-acyl-sn-glycero-3-phosphate. The chain crosses the membrane as a helical span at residues 53-77 (LVMGLGITVCIFIMLANLLVMVAIY). Residues 78–85 (VNRRFHFP) are Cytoplasmic-facing. Residues 86 to 109 (IYYLMANLAAADFFAGLAYFYLMF) form a helical membrane-spanning segment. The Extracellular segment spans residues 110-123 (NTGPNTRRLTVSTW). The chain crosses the membrane as a helical span at residues 124 to 146 (LLRQGLIDTSLTASVANLLAIAI). Residue 126 to 131 (RQGLID) coordinates a 1-acyl-sn-glycero-3-phosphate. At 147 to 165 (ERHITVFRMQLHTRMSNRR) the chain is on the cytoplasmic side. A helical transmembrane segment spans residues 166–186 (VVVVIVVIWTVAIVMGAIPSV). Residues 187 to 206 (GWNCICDLEQCSNMAPLYSD) lie on the Extracellular side of the membrane. The chain crosses the membrane as a helical span at residues 207–227 (SYLIFWTIFNLVTFVVMVVLY). Trp212 is a binding site for a 1-acyl-sn-glycero-3-phosphate. The Cytoplasmic segment spans residues 228 to 257 (AHIFVYVRQKTMRMSRHSSGPRRNRDTMMS). A helical membrane pass occupies residues 258 to 282 (LLKTVVIVLGAFIVCWTPGLVLLLL). Over 283 to 296 (DICCPQCNILAYEK) the chain is Extracellular. A disulfide bridge links Cys286 with Cys289. The chain crosses the membrane as a helical span at residues 297-317 (FFLLLAEFNSAMNPIIYSYRD). Residues 318-366 (KEMSATFKQILCCQRTENVNGPTEGSDRSASSLNHTILAGVHSNDHSVV) lie on the Cytoplasmic side of the membrane.

This sequence belongs to the G-protein coupled receptor 1 family. As to expression, expressed at high levels in oocytes and at lower levels in brain and spinal cord. Below detection level in lung, heart, kidney, liver, muscle, stomach, and intestine.

It localises to the cell surface. Its subcellular location is the cell membrane. It is found in the endosome. Its function is as follows. Receptor for lysophosphatidic acid (LPA). Plays a role in the reorganization of the actin cytoskeleton, cell migration, differentiation and proliferation, and thereby contributes to the responses to tissue damage and infectious agents. Activates downstream signaling cascades via the G(i)/G(o), G(12)/G(13), and G(q) families of heteromeric G proteins. Signaling inhibits adenylyl cyclase activity and decreases cellular cAMP levels. Signaling triggers an increase of cytoplasmic Ca(2+) levels. Signaling leads to the activation of phospholipase C (PLC) and the formation of inositol 1,4,5-trisphosphate. Signaling mediates activation of down-stream MAP kinases. Contributes to the regulation of cell shape. Promotes Rho-dependent reorganization of the actin cytoskeleton in neuronal cells and neurite retraction. Promotes the activation of Rho and the formation of actin stress fibers. Promotes formation of lamellipodia at the leading edge of migrating cells via activation of Rac. Through its function as lysophosphatidic acid receptor, plays a role in chemotaxis and cell migration, including responses to injury and wounding. Promotes cell proliferation in response to lysophosphatidic acid. The polypeptide is Lysophosphatidic acid receptor 1-A (lpar1-a) (Xenopus laevis (African clawed frog)).